Reading from the N-terminus, the 571-residue chain is Proline--tRNA ligase (571 aa).

Belongs to the class-II aminoacyl-tRNA synthetase family. ProS type 1 subfamily. As to quaternary structure, homodimer.

The protein localises to the cytoplasm. The catalysed reaction is tRNA(Pro) + L-proline + ATP = L-prolyl-tRNA(Pro) + AMP + diphosphate. Catalyzes the attachment of proline to tRNA(Pro) in a two-step reaction: proline is first activated by ATP to form Pro-AMP and then transferred to the acceptor end of tRNA(Pro). As ProRS can inadvertently accommodate and process non-cognate amino acids such as alanine and cysteine, to avoid such errors it has two additional distinct editing activities against alanine. One activity is designated as 'pretransfer' editing and involves the tRNA(Pro)-independent hydrolysis of activated Ala-AMP. The other activity is designated 'posttransfer' editing and involves deacylation of mischarged Ala-tRNA(Pro). The misacylated Cys-tRNA(Pro) is not edited by ProRS. This Actinobacillus pleuropneumoniae serotype 3 (strain JL03) protein is Proline--tRNA ligase.